Here is a 1450-residue protein sequence, read N- to C-terminus: DNA-directed RNA polymerase RPB1 homolog (1450 aa).

This sequence belongs to the RNA polymerase beta' chain family. In terms of assembly, part of the viral DNA-directed RNA polymerase that consists of 8 polII-like subunits (RPB1, RPB2, RPB3, RPB5, RPB6, RPB7, RPB9, RPB10), a capping enzyme and a termination factor.

The protein resides in the virion. The catalysed reaction is RNA(n) + a ribonucleoside 5'-triphosphate = RNA(n+1) + diphosphate. Catalytic component of the DNA-directed RNA polymerase (RNAP) that catalyzes the transcription in the cytoplasm of viral DNA into RNA using the four ribonucleoside triphosphates as substrates. Forms the polymerase active center together with RPB2. Part of the core element with the central large cleft, the clamp element that moves to open and close the cleft and the jaws that are thought to grab the incoming DNA template. In African swine fever virus (strain Badajoz 1971 Vero-adapted) (Ba71V), this protein is DNA-directed RNA polymerase RPB1 homolog.